Reading from the N-terminus, the 125-residue chain is Protein AC4 (125 aa).

The protein belongs to the geminiviridae protein AC4/C4 family.

Its function is as follows. Pathogenicity determinant. May act as a suppressor of RNA-mediated gene silencing, also known as post-transcriptional gene silencing (PTGS), a mechanism of plant viral defense that limits the accumulation of viral RNAs. The sequence is that of Protein AC4 from Cucurbita moschata (Winter crookneck squash).